Consider the following 333-residue polypeptide: Mitochondrial thiamine pyrophosphate carrier 1 (333 aa).

3 Solcar repeats span residues 12–115, 129–215, and 222–318; these read GSRL…ITQF, PPSV…LRPR, and PYSS…ALKL. 6 consecutive transmembrane segments (helical) span residues 17–35, 96–112, 135–155, 190–209, 221–238, and 293–310; these read VTAAGATAGLISRFVIAPL, LLYVSYAAVQFTTYRSI, FIAGASAGGVATAVTYPLDLL, GLGPGLAQIIPYMGTFFCVY, LPYSSGSAVAGVLASVMA, and GLTVSLFKAAPASAVTMW.

Belongs to the mitochondrial carrier (TC 2.A.29) family.

It localises to the mitochondrion inner membrane. Mitochondrial transporter that mediates uptake of thiamine pyrophosphate (ThPP) into mitochondria. This chain is Mitochondrial thiamine pyrophosphate carrier 1 (tpc-1), found in Neurospora crassa (strain ATCC 24698 / 74-OR23-1A / CBS 708.71 / DSM 1257 / FGSC 987).